The primary structure comprises 155 residues: Interleukin-2 (155 aa).

Positions 1–20 are cleaved as a signal peptide; that stretch reads MYSRQLASCVALALVLLANS. O-linked (GalNAc...) threonine glycosylation occurs at Thr23. Cys78 and Cys126 are disulfide-bonded.

Belongs to the IL-2 family.

The protein resides in the secreted. Its function is as follows. Cytokine produced by activated CD4-positive helper T-cells and to a lesser extend activated CD8-positive T-cells and natural killer (NK) cells that plays pivotal roles in the immune response and tolerance. Binds to a receptor complex composed of either the high-affinity trimeric IL-2R (IL2RA/CD25, IL2RB/CD122 and IL2RG/CD132) or the low-affinity dimeric IL-2R (IL2RB and IL2RG). Interaction with the receptor leads to oligomerization and conformation changes in the IL-2R subunits resulting in downstream signaling starting with phosphorylation of JAK1 and JAK3. In turn, JAK1 and JAK3 phosphorylate the receptor to form a docking site leading to the phosphorylation of several substrates including STAT5. This process leads to activation of several pathways including STAT, phosphoinositide-3-kinase/PI3K and mitogen-activated protein kinase/MAPK pathways. Functions as a T-cell growth factor and can increase NK-cell cytolytic activity as well. Promotes strong proliferation of activated B-cells and subsequently immunoglobulin production. Plays a pivotal role in regulating the adaptive immune system by controlling the survival and proliferation of regulatory T-cells, which are required for the maintenance of immune tolerance. Moreover, participates in the differentiation and homeostasis of effector T-cell subsets, including Th1, Th2, Th17 as well as memory CD8-positive T-cells. The polypeptide is Interleukin-2 (IL2) (Meriones unguiculatus (Mongolian jird)).